We begin with the raw amino-acid sequence, 379 residues long: MTNTRKNHPLMKIINNSFIDLPTPPNISSLWNFGSLLGACLTIQVITGLFLAMHYTADTTTAFSSVTHICRDVNYGWTIRYLHANGASMFFMCLFIHVGRGLYYGSFALLETWNIGIMLLFSVMATAFMGYVLPWGQMSFWGATVITNLLSAIPYVGTNLVEWIWGGFSVGKPTLTRFFALHFILPFIISALAMIHLLFLHETGSNNPLGMSSNSDKIPFHPYYTTKDFLGLLLLILLLMTLTLFYPDLLGDPDNYTPANPLNTPPHIKPEWYFLFAYAILRSIPNKPGGVVALILSILILAIIPFLQPSKQQTMMFRPLSQFLFWILVADLLTLTWIGGQPVENPFISIGQTASILYFSLMVFIMPMTCLIENKMLKW.

Helical transmembrane passes span 33 to 53 (FGSLLGACLTIQVITGLFLAM), 77 to 98 (WTIRYLHANGASMFFMCLFIHV), 113 to 133 (WNIGIMLLFSVMATAFMGYVL), and 178 to 198 (FFALHFILPFIISALAMIHLL). Heme b-binding residues include histidine 83 and histidine 97. Histidine 182 and histidine 196 together coordinate heme b. Histidine 201 is an a ubiquinone binding site. 4 consecutive transmembrane segments (helical) span residues 226-246 (TKDFLGLLLLILLLMTLTLFY), 288-308 (PGGVVALILSILILAIIPFLQ), 320-340 (LSQFLFWILVADLLTLTWIGG), and 347-367 (FISIGQTASILYFSLMVFIMP).

The protein belongs to the cytochrome b family. The cytochrome bc1 complex contains 11 subunits: 3 respiratory subunits (MT-CYB, CYC1 and UQCRFS1), 2 core proteins (UQCRC1 and UQCRC2) and 6 low-molecular weight proteins (UQCRH/QCR6, UQCRB/QCR7, UQCRQ/QCR8, UQCR10/QCR9, UQCR11/QCR10 and a cleavage product of UQCRFS1). This cytochrome bc1 complex then forms a dimer. It depends on heme b as a cofactor.

The protein localises to the mitochondrion inner membrane. Component of the ubiquinol-cytochrome c reductase complex (complex III or cytochrome b-c1 complex) that is part of the mitochondrial respiratory chain. The b-c1 complex mediates electron transfer from ubiquinol to cytochrome c. Contributes to the generation of a proton gradient across the mitochondrial membrane that is then used for ATP synthesis. The polypeptide is Cytochrome b (MT-CYB) (Lepilemur ruficaudatus (Red-tailed sportive lemur)).